A 972-amino-acid polypeptide reads, in one-letter code: UvrABC system protein A (972 aa).

An ATP-binding site is contributed by 32–39 (GLSGSGKS). Residues 257–285 (CPNGHALAVDDLEPRSFSFNSPYGACPEC) form a C4-type; atypical zinc finger. ABC transporter domains follow at residues 315 to 601 (WSNG…KDSI) and 621 to 950 (VDPR…KFLA). 654 to 661 (GVSGSGKS) serves as a coordination point for ATP. The C4-type zinc-finger motif lies at 753–779 (CEACTGDGTIKIEMNFLPDVYVPCEVC).

Belongs to the ABC transporter superfamily. UvrA family. As to quaternary structure, forms a heterotetramer with UvrB during the search for lesions.

It localises to the cytoplasm. The UvrABC repair system catalyzes the recognition and processing of DNA lesions. UvrA is an ATPase and a DNA-binding protein. A damage recognition complex composed of 2 UvrA and 2 UvrB subunits scans DNA for abnormalities. When the presence of a lesion has been verified by UvrB, the UvrA molecules dissociate. The polypeptide is UvrABC system protein A (Mycobacterium bovis (strain ATCC BAA-935 / AF2122/97)).